The primary structure comprises 297 residues: Transcriptional regulator protein Pur-beta (297 aa).

Disordered regions lie at residues 1-26 (MADG…EQET) and 275-297 (QERH…VDDD). Ala-2 carries the post-translational modification N-acetylalanine. The tract at residues 23–246 (EQETQELASK…LRVSEVKPSY (224 aa)) is DNA-binding. A compositionally biased stretch (basic and acidic residues) spans 275-288 (QERHRDKMYERREE).

The protein belongs to the PUR DNA-binding protein family.

The protein localises to the nucleus. Its function is as follows. Transcriptional regulator which can act as an activator or a repressor. The protein is Transcriptional regulator protein Pur-beta (purb) of Danio rerio (Zebrafish).